A 372-amino-acid polypeptide reads, in one-letter code: Cobalt-precorrin-5B C(1)-methyltransferase (372 aa).

Belongs to the CbiD family.

It catalyses the reaction Co-precorrin-5B + S-adenosyl-L-methionine = Co-precorrin-6A + S-adenosyl-L-homocysteine. The protein operates within cofactor biosynthesis; adenosylcobalamin biosynthesis; cob(II)yrinate a,c-diamide from sirohydrochlorin (anaerobic route): step 6/10. Functionally, catalyzes the methylation of C-1 in cobalt-precorrin-5B to form cobalt-precorrin-6A. This Geobacillus thermodenitrificans (strain NG80-2) protein is Cobalt-precorrin-5B C(1)-methyltransferase.